The chain runs to 205 residues: tRNA (guanine-N(7)-)-methyltransferase (205 aa).

The S-adenosyl-L-methionine site is built by Glu36, Glu61, Asp88, and Asp109. Asp109 is a catalytic residue. A substrate-binding site is contributed by Lys113. Positions 115–120 (RHEKRR) are interaction with RNA. Residues Asp145 and 183–186 (TGYE) contribute to the substrate site.

The protein belongs to the class I-like SAM-binding methyltransferase superfamily. TrmB family.

It catalyses the reaction guanosine(46) in tRNA + S-adenosyl-L-methionine = N(7)-methylguanosine(46) in tRNA + S-adenosyl-L-homocysteine. It functions in the pathway tRNA modification; N(7)-methylguanine-tRNA biosynthesis. Catalyzes the formation of N(7)-methylguanine at position 46 (m7G46) in tRNA. The polypeptide is tRNA (guanine-N(7)-)-methyltransferase (Mycoplasmopsis agalactiae (strain NCTC 10123 / CIP 59.7 / PG2) (Mycoplasma agalactiae)).